A 349-amino-acid chain; its full sequence is Phosphoribosylformylglycinamidine cyclo-ligase (349 aa).

This sequence belongs to the AIR synthase family.

Its subcellular location is the cytoplasm. The enzyme catalyses 2-formamido-N(1)-(5-O-phospho-beta-D-ribosyl)acetamidine + ATP = 5-amino-1-(5-phospho-beta-D-ribosyl)imidazole + ADP + phosphate + H(+). The protein operates within purine metabolism; IMP biosynthesis via de novo pathway; 5-amino-1-(5-phospho-D-ribosyl)imidazole from N(2)-formyl-N(1)-(5-phospho-D-ribosyl)glycinamide: step 2/2. The polypeptide is Phosphoribosylformylglycinamidine cyclo-ligase (Methanococcus maripaludis (strain C7 / ATCC BAA-1331)).